Consider the following 219-residue polypeptide: Uracil-DNA glycosylase (219 aa).

Residue aspartate 64 is the Proton acceptor of the active site.

It belongs to the uracil-DNA glycosylase (UDG) superfamily. UNG family.

The protein localises to the cytoplasm. It carries out the reaction Hydrolyzes single-stranded DNA or mismatched double-stranded DNA and polynucleotides, releasing free uracil.. In terms of biological role, excises uracil residues from the DNA which can arise as a result of misincorporation of dUMP residues by DNA polymerase or due to deamination of cytosine. This chain is Uracil-DNA glycosylase, found in Leuconostoc citreum (strain KM20).